The following is a 92-amino-acid chain: Large ribosomal subunit protein bL28 (92 aa).

Belongs to the bacterial ribosomal protein bL28 family.

The chain is Large ribosomal subunit protein bL28 from Borrelia hermsii (strain HS1 / DAH).